The following is a 309-amino-acid chain: Tagatose-6-phosphate kinase (309 aa).

Belongs to the carbohydrate kinase PfkB family. LacC subfamily.

The catalysed reaction is D-tagatofuranose 6-phosphate + ATP = D-tagatofuranose 1,6-bisphosphate + ADP + H(+). Its pathway is carbohydrate metabolism; D-tagatose 6-phosphate degradation; D-glyceraldehyde 3-phosphate and glycerone phosphate from D-tagatose 6-phosphate: step 1/2. This Streptococcus pneumoniae (strain Hungary19A-6) protein is Tagatose-6-phosphate kinase.